We begin with the raw amino-acid sequence, 256 residues long: Phosphatidylglycerol--prolipoprotein diacylglyceryl transferase (256 aa).

3 helical membrane-spanning segments follow: residues 19–39 (VHWYGLMYLIGFVSAWLLGYW), 56–76 (LIFYSALGVILGGRVGYMLFY), and 91–111 (IWEGGMSFHGGLLGVVIAAWL). Arg139 lines the a 1,2-diacyl-sn-glycero-3-phospho-(1'-sn-glycerol) pocket. Residues 231–251 (FGWLTMGQVLSIPMLLIGIWL) traverse the membrane as a helical segment.

Belongs to the Lgt family.

It is found in the cell inner membrane. It catalyses the reaction L-cysteinyl-[prolipoprotein] + a 1,2-diacyl-sn-glycero-3-phospho-(1'-sn-glycerol) = an S-1,2-diacyl-sn-glyceryl-L-cysteinyl-[prolipoprotein] + sn-glycerol 1-phosphate + H(+). It functions in the pathway protein modification; lipoprotein biosynthesis (diacylglyceryl transfer). In terms of biological role, catalyzes the transfer of the diacylglyceryl group from phosphatidylglycerol to the sulfhydryl group of the N-terminal cysteine of a prolipoprotein, the first step in the formation of mature lipoproteins. The sequence is that of Phosphatidylglycerol--prolipoprotein diacylglyceryl transferase from Legionella pneumophila (strain Lens).